Reading from the N-terminus, the 289-residue chain is Acetyl-coenzyme A carboxylase carboxyl transferase subunit beta (289 aa).

One can recognise a CoA carboxyltransferase N-terminal domain in the interval Val28–Ser289. Zn(2+) contacts are provided by Cys32, Cys35, Cys51, and Cys54. The C4-type zinc-finger motif lies at Cys32–Cys54.

Belongs to the AccD/PCCB family. As to quaternary structure, acetyl-CoA carboxylase is a heterohexamer composed of biotin carboxyl carrier protein (AccB), biotin carboxylase (AccC) and two subunits each of ACCase subunit alpha (AccA) and ACCase subunit beta (AccD). The cofactor is Zn(2+).

The protein resides in the cytoplasm. The catalysed reaction is N(6)-carboxybiotinyl-L-lysyl-[protein] + acetyl-CoA = N(6)-biotinyl-L-lysyl-[protein] + malonyl-CoA. It participates in lipid metabolism; malonyl-CoA biosynthesis; malonyl-CoA from acetyl-CoA: step 1/1. Functionally, component of the acetyl coenzyme A carboxylase (ACC) complex. Biotin carboxylase (BC) catalyzes the carboxylation of biotin on its carrier protein (BCCP) and then the CO(2) group is transferred by the transcarboxylase to acetyl-CoA to form malonyl-CoA. In Bacillus cereus (strain ATCC 14579 / DSM 31 / CCUG 7414 / JCM 2152 / NBRC 15305 / NCIMB 9373 / NCTC 2599 / NRRL B-3711), this protein is Acetyl-coenzyme A carboxylase carboxyl transferase subunit beta.